The primary structure comprises 184 residues: Ribosome-recycling factor (184 aa).

This sequence belongs to the RRF family.

It localises to the cytoplasm. In terms of biological role, responsible for the release of ribosomes from messenger RNA at the termination of protein biosynthesis. May increase the efficiency of translation by recycling ribosomes from one round of translation to another. This Bifidobacterium animalis subsp. lactis (strain AD011) protein is Ribosome-recycling factor.